Here is a 638-residue protein sequence, read N- to C-terminus: Glucans biosynthesis glucosyltransferase H (638 aa).

Transmembrane regions (helical) follow at residues 60–82 (FYLI…AVMW), 97–119 (FMFL…FCVV), 415–437 (IGHY…IPLV), 464–486 (LWIF…FALL), 499–521 (LRVL…VVMY), and 578–600 (LAMW…ALTS).

The protein belongs to the glycosyltransferase 2 family. OpgH subfamily.

It localises to the cell inner membrane. The protein operates within glycan metabolism; osmoregulated periplasmic glucan (OPG) biosynthesis. In terms of biological role, involved in the biosynthesis of osmoregulated periplasmic glucans (OPGs). In Xylella fastidiosa (strain 9a5c), this protein is Glucans biosynthesis glucosyltransferase H.